A 29-amino-acid chain; its full sequence is Cyclotide mela-1 (29 aa).

A cross-link (cyclopeptide (Gly-Asp)) is located at residues 1–29 (GKYTCGETCFKGKCYTPGCTCSYPICKKD). Intrachain disulfides connect Cys-5/Cys-19, Cys-9/Cys-21, and Cys-14/Cys-26.

In terms of processing, this is a cyclic peptide. Post-translationally, contains 3 disulfide bonds.

Functionally, probably participates in a plant defense mechanism (Potential). Binds to and induces leakage in phospholipd membranes, particularly ones containing 1-palmitoyl-2-oleophosphatidylethanolamine (POPE). In vitro, displays cytotoxicity against cultured cells but no hemolytic activity towards fresh erythrocytes. Not active against Gram-negative bacterium E.coli ATCC 25922 or Gram-positive bacterium S.aureus ATCC 25923 up to a concentration of 64 uM. The chain is Cyclotide mela-1 from Melicytus latifolius (Norfolk Island mahoe).